The primary structure comprises 51 residues: Large ribosomal subunit protein eL39 (51 aa).

The protein belongs to the eukaryotic ribosomal protein eL39 family. In terms of assembly, part of the 50S ribosomal subunit.

The polypeptide is Large ribosomal subunit protein eL39 (Thermococcus kodakarensis (strain ATCC BAA-918 / JCM 12380 / KOD1) (Pyrococcus kodakaraensis (strain KOD1))).